We begin with the raw amino-acid sequence, 513 residues long: ATP synthase subunit alpha 1 (513 aa).

169-176 lines the ATP pocket; that stretch reads GDRQCGKT.

It belongs to the ATPase alpha/beta chains family. As to quaternary structure, F-type ATPases have 2 components, CF(1) - the catalytic core - and CF(0) - the membrane proton channel. CF(1) has five subunits: alpha(3), beta(3), gamma(1), delta(1), epsilon(1). CF(0) has three main subunits: a(1), b(2) and c(9-12). The alpha and beta chains form an alternating ring which encloses part of the gamma chain. CF(1) is attached to CF(0) by a central stalk formed by the gamma and epsilon chains, while a peripheral stalk is formed by the delta and b chains.

The protein resides in the cell inner membrane. It carries out the reaction ATP + H2O + 4 H(+)(in) = ADP + phosphate + 5 H(+)(out). Its function is as follows. Produces ATP from ADP in the presence of a proton gradient across the membrane. The alpha chain is a regulatory subunit. The polypeptide is ATP synthase subunit alpha 1 (Burkholderia thailandensis (strain ATCC 700388 / DSM 13276 / CCUG 48851 / CIP 106301 / E264)).